The following is a 224-amino-acid chain: Artemin (224 aa).

The signal sequence occupies residues 1–39 (MELGLGEPTALSHCLRPRWQPALWPTLAALALLSSVTEA). A propeptide spanning residues 40-111 (SLDPMSRSPA…AALRGARAAR (72 aa)) is cleaved from the precursor. Residues 41-124 (LDPMSRSPAS…RSSRARATDA (84 aa)) form a disordered region. Positions 80–95 (RPPPQSPQPAPPPPGP) are enriched in pro residues. A compositionally biased stretch (low complexity) spans 96 to 116 (ALQSPPAALRGARAARAGTRS). Cystine bridges form between Cys127/Cys192, Cys154/Cys220, and Cys158/Cys222. Residue Asn206 is glycosylated (N-linked (GlcNAc...) asparagine).

It belongs to the TGF-beta family. GDNF subfamily. As to quaternary structure, homodimer; disulfide-linked. Interacts with GFRA3 coreceptor and RET: forms a 2:2:2 ternary complex composed of ARTN ligand, GFRA3 and RET receptor. In terms of tissue distribution, cochlea. Expressed at higher level in sesorineural epithelium than in the modiolus region or substantia nigra.

The protein resides in the secreted. Its function is as follows. Growth factor that supports the survival of sensory and sympathetic peripheral neurons in culture and also supports the survival of dopaminergic neurons of the ventral mid-brain. Acts by binding to its coreceptor, GFRA3, leading to autophosphorylation and activation of the RET receptor. Strong attractant of gut hematopoietic cells thus promoting the formation Peyer's patch-like structures, a major component of the gut-associated lymphoid tissue. This chain is Artemin (Artn), found in Rattus norvegicus (Rat).